The sequence spans 120 residues: Large ribosomal subunit protein bL20 (120 aa).

The protein belongs to the bacterial ribosomal protein bL20 family.

In terms of biological role, binds directly to 23S ribosomal RNA and is necessary for the in vitro assembly process of the 50S ribosomal subunit. It is not involved in the protein synthesizing functions of that subunit. In Cereibacter sphaeroides (strain ATCC 17025 / ATH 2.4.3) (Rhodobacter sphaeroides), this protein is Large ribosomal subunit protein bL20.